Reading from the N-terminus, the 534-residue chain is ATP synthase subunit alpha 2 (534 aa).

Position 175–182 (175–182 (GDRQTGKT)) interacts with ATP. Residues 506-534 (FQPAPEPETAPKTKTDIKPKPKAAGGESS) are disordered. Over residues 514–524 (TAPKTKTDIKP) the composition is skewed to basic and acidic residues.

This sequence belongs to the ATPase alpha/beta chains family. In terms of assembly, F-type ATPases have 2 components, CF(1) - the catalytic core - and CF(0) - the membrane proton channel. CF(1) has five subunits: alpha(3), beta(3), gamma(1), delta(1), epsilon(1). CF(0) has three main subunits: a(1), b(2) and c(9-12). The alpha and beta chains form an alternating ring which encloses part of the gamma chain. CF(1) is attached to CF(0) by a central stalk formed by the gamma and epsilon chains, while a peripheral stalk is formed by the delta and b chains.

It is found in the cell inner membrane. The catalysed reaction is ATP + H2O + 4 H(+)(in) = ADP + phosphate + 5 H(+)(out). Functionally, produces ATP from ADP in the presence of a proton gradient across the membrane. The alpha chain is a regulatory subunit. The polypeptide is ATP synthase subunit alpha 2 (Albidiferax ferrireducens (strain ATCC BAA-621 / DSM 15236 / T118) (Rhodoferax ferrireducens)).